Consider the following 357-residue polypeptide: MSEKVLFIDRDGTLISEPLDNFQVDSFDKLEFKQDVISSLITLKKFNYKFVMVTNQDGLGSKNFPYKSFIRPHEFMIDVFLSQGIKFEEVLICPHELKSGCQCRKPNLGMVQHWLLNDMLDKQHSCVIGDRKTDMILANNMGILGIRYGTKQGNSWSDIVFKLTKKHDRHAKVVRNTKETNVSIEVWLDKQGGSLINTGLNMFNHMLDQIAVHSCIRMKIISSGDICVDDHHTVEDVGIVLGKAILKALGNKLGINRFGFALPMDDSSSYCLLDISGRPFLKFRSYFKHQYIGDMSSEMVRHFFQSLAFAMKCTLHLRSMGINDHHRLESLFKVFGKTLKQAIVVSGKNLPSSKGLL.

The interval 1-168 (MSEKVLFIDR…IVFKLTKKHD (168 aa)) is histidinol-phosphatase. Catalysis depends on aspartate 9, which acts as the Nucleophile. Residues aspartate 9 and aspartate 11 each contribute to the Mg(2+) site. Aspartate 11 serves as the catalytic Proton donor. Zn(2+)-binding residues include cysteine 93, histidine 95, cysteine 101, and cysteine 103. Aspartate 130 is a binding site for Mg(2+). The interval 169-357 (RHAKVVRNTK…KNLPSSKGLL (189 aa)) is imidazoleglycerol-phosphate dehydratase.

This sequence in the N-terminal section; belongs to the histidinol-phosphatase family. It in the C-terminal section; belongs to the imidazoleglycerol-phosphate dehydratase family. Mg(2+) is required as a cofactor. Requires Zn(2+) as cofactor.

It localises to the cytoplasm. It catalyses the reaction D-erythro-1-(imidazol-4-yl)glycerol 3-phosphate = 3-(imidazol-4-yl)-2-oxopropyl phosphate + H2O. The enzyme catalyses L-histidinol phosphate + H2O = L-histidinol + phosphate. Its pathway is amino-acid biosynthesis; L-histidine biosynthesis; L-histidine from 5-phospho-alpha-D-ribose 1-diphosphate: step 6/9. It participates in amino-acid biosynthesis; L-histidine biosynthesis; L-histidine from 5-phospho-alpha-D-ribose 1-diphosphate: step 8/9. The polypeptide is Histidine biosynthesis bifunctional protein HisB (Buchnera aphidicola subsp. Baizongia pistaciae (strain Bp)).